The sequence spans 404 residues: uncharacterized protein (404 aa).

Disordered regions lie at residues 261–307 (VSTG…SPSL) and 320–340 (KKSH…GGAD). Phosphoserine occurs at positions 267, 276, and 279. Phosphothreonine occurs at positions 290 and 293. A phosphoserine mark is found at serine 304, serine 306, serine 324, serine 358, and serine 362. The segment covering 320-336 (KKSHSANDSEEFFREDD) has biased composition (basic and acidic residues).

This is an uncharacterized protein from Homo sapiens (Human).